Here is a 429-residue protein sequence, read N- to C-terminus: Tyrosine-protein kinase STYK1 (429 aa).

A helical transmembrane segment spans residues 30–50; that stretch reads VIIVPALLVGGFLILLAIILW. A disordered region spans residues 58–83; it reads SQRQSPGPRGTASVPASRGRSQEAAG. A Protein kinase domain is found at 119 to 390; that stretch reads LEVLEQIHSG…GQLLQRLEAA (272 aa). Residues 125-133 and Lys-152 each bind ATP; that span reads IHSGSCGTL. Asp-256 serves as the catalytic Proton acceptor.

This sequence belongs to the protein kinase superfamily. Tyr protein kinase family. As to expression, highly expressed in colon and small intestine. Weakly or not expressed in spleen, skeletal muscle, liver, kidney, heart and brain. Expressed in transformed kidney cell lines (COS-1 and HEK293T).

Its subcellular location is the membrane. It carries out the reaction L-tyrosyl-[protein] + ATP = O-phospho-L-tyrosyl-[protein] + ADP + H(+). Its function is as follows. Probable tyrosine protein-kinase, which has strong transforming capabilities on a variety of cell lines including NIH 3T3 fibroblasts and on athymic nude mice. When overexpressed, it can also induce tumor cell invasion as well as metastasis in distant organs. May act by activating both MAP kinase and phosphatidylinositol 3'-kinases (PI3K) pathways. This is Tyrosine-protein kinase STYK1 (Styk1) from Mus musculus (Mouse).